The chain runs to 655 residues: Protein movement modulator (655 aa).

The Extracellular portion of the chain corresponds to 1 to 54; that stretch reads MEQPSILVKILHSIPHVNYTFRRVNDTFNPDSDVYLEPTNNKLQCQQKGIELQS. N-linked (GlcNAc...) asparagine glycosylation is found at N18 and N25. The helical transmembrane segment at 55–75 threads the bilayer; the sequence is LVILASIPAGLLIGSLLGLLL. At 76-95 the chain is on the cytoplasmic side; the sequence is YLLTRCCDRRQRKPSAQRCQ. Residues 96–116 form a helical membrane-spanning segment; it reads SCSLVIITLMTCAAIGLGLYG. Residues 117–231 lie on the Extracellular side of the membrane; the sequence is NDDFHNGLLQ…GEFYESIRWP (115 aa). Residues N171, N188, and N211 are each glycosylated (N-linked (GlcNAc...) asparagine). The chain crosses the membrane as a helical span at residues 232–252; it reads ATLAFLTVLLLLCTVLVIGVA. At 253 to 258 the chain is on the cytoplasmic side; that stretch reads RRSRCT. A helical transmembrane segment spans residues 259–279; sequence LIFFSVSGLFCIIICWLLAGV. Topologically, residues 280–401 are extracellular; sequence YLASSVAAGD…ALRGLCGGGL (122 aa). N326 and N372 each carry an N-linked (GlcNAc...) asparagine glycan. The helical transmembrane segment at 402–422 threads the bilayer; it reads LGLSLMMVAGLLTSFLLTILV. Topologically, residues 423–655 are cytoplasmic; the sequence is YADSHAWIYL…CKTLESNDFY (233 aa). Positions 446–576 are disordered; sequence APLFPASNAP…NNHYNNTQHR (131 aa). Over residues 450 to 464 the composition is skewed to low complexity; that stretch reads PASNAPSASISPTAP. Positions 465–480 are enriched in polar residues; that stretch reads LSTGTINRTLLHHQQA. Residues 482–509 show a composition bias toward gly residues; that stretch reads SGGGSGTLPGSGGGAGAGGGVGANGHNG. Low complexity-rich tracts occupy residues 526 to 539 and 546 to 576; these read SPSSQSSHTSSTAT and SYHNSHQQHNNHLYSNHYSHSNNHYNNTQHR. S597 and S599 each carry phosphoserine.

This sequence belongs to the tweety family.

Its subcellular location is the cell membrane. It carries out the reaction chloride(in) = chloride(out). In terms of biological role, probable large-conductance Ca(2+)-activated chloride channel. Modulator of embryonic movement. In Drosophila melanogaster (Fruit fly), this protein is Protein movement modulator.